Consider the following 327-residue polypeptide: uncharacterized protein (327 aa).

In terms of domain architecture, S4 RNA-binding spans 12 to 84 (MRIDRYLTQQ…IPITILYEDD (73 aa)). Residue Asp137 is part of the active site.

It belongs to the pseudouridine synthase RluA family.

The enzyme catalyses a uridine in RNA = a pseudouridine in RNA. This is an uncharacterized protein from Chlorobaculum parvum (strain DSM 263 / NCIMB 8327) (Chlorobium vibrioforme subsp. thiosulfatophilum).